Here is a 183-residue protein sequence, read N- to C-terminus: Bifunctional protein PyrR (183 aa).

Positions valine 98 to threonine 110 match the PRPP-binding motif.

The protein belongs to the purine/pyrimidine phosphoribosyltransferase family. PyrR subfamily.

The enzyme catalyses UMP + diphosphate = 5-phospho-alpha-D-ribose 1-diphosphate + uracil. Functionally, regulates the transcription of the pyrimidine nucleotide (pyr) operon in response to exogenous pyrimidines. Also displays a weak uracil phosphoribosyltransferase activity which is not physiologically significant. The protein is Bifunctional protein PyrR of Roseiflexus sp. (strain RS-1).